Here is a 399-residue protein sequence, read N- to C-terminus: Formate-dependent phosphoribosylglycinamide formyltransferase (399 aa).

Residues 8 to 9 (EL) and Glu68 contribute to the N(1)-(5-phospho-beta-D-ribosyl)glycinamide site. Residues Arg100, Lys141, 146–151 (SSGHGQ), 185–188 (EALA), and Glu193 each bind ATP. Residues 105–308 (VLAHEELGLP…EFALHARAIL (204 aa)) form the ATP-grasp domain. Positions 266 and 279 each coordinate Mg(2+). Residues Asp286, Lys361, and 368–369 (RR) each bind N(1)-(5-phospho-beta-D-ribosyl)glycinamide.

Belongs to the PurK/PurT family. In terms of assembly, homodimer.

It carries out the reaction N(1)-(5-phospho-beta-D-ribosyl)glycinamide + formate + ATP = N(2)-formyl-N(1)-(5-phospho-beta-D-ribosyl)glycinamide + ADP + phosphate + H(+). It participates in purine metabolism; IMP biosynthesis via de novo pathway; N(2)-formyl-N(1)-(5-phospho-D-ribosyl)glycinamide from N(1)-(5-phospho-D-ribosyl)glycinamide (formate route): step 1/1. Its function is as follows. Involved in the de novo purine biosynthesis. Catalyzes the transfer of formate to 5-phospho-ribosyl-glycinamide (GAR), producing 5-phospho-ribosyl-N-formylglycinamide (FGAR). Formate is provided by PurU via hydrolysis of 10-formyl-tetrahydrofolate. This Bifidobacterium longum (strain NCC 2705) protein is Formate-dependent phosphoribosylglycinamide formyltransferase.